We begin with the raw amino-acid sequence, 102 residues long: Protein S100-A11 (102 aa).

Serine 2 carries the phosphoserine modification. Threonine 7 carries the post-translational modification Phosphothreonine. 2 consecutive EF-hand domains span residues 12–47 (ESLIAVFQKYAGKDGHSVTLSKTEFLSFMNTELAAF) and 52–87 (KDPGVLDRMMKKLDLNSDGQLDFQEFLNLIGGLAVA). At lysine 24 the chain carries N6-acetyllysine. 8 residues coordinate Ca(2+): serine 28, threonine 30, glutamate 35, aspartate 65, asparagine 67, aspartate 69, glutamine 71, and glutamate 76.

It belongs to the S-100 family. As to quaternary structure, homodimer; disulfide-linked. In terms of processing, phosphorylation at Thr-7 significantly suppresses homodimerization and promotes association with NCL/nucleolin which induces nuclear translocation. In terms of tissue distribution, smooth muscle and non-muscle tissues.

It localises to the cytoplasm. The protein localises to the nucleus. Functionally, facilitates the differentiation and the cornification of keratinocytes. This chain is Protein S100-A11 (S100A11), found in Oryctolagus cuniculus (Rabbit).